We begin with the raw amino-acid sequence, 30 residues long: Ribonuclease pancreatic (30 aa).

A compositionally biased stretch (basic and acidic residues) spans 1 to 13 (KETAAAKFERQHM). The segment at 1 to 21 (KETAAAKFERQHMDPAPAAAX) is disordered. 2 residues coordinate substrate: K7 and R10. Catalysis depends on H12, which acts as the Proton acceptor.

This sequence belongs to the pancreatic ribonuclease family. In terms of assembly, monomer. Interacts with and forms tight 1:1 complexes with RNH1. Dimerization of two such complexes may occur. Interaction with RNH1 inhibits this protein. In terms of tissue distribution, pancreas.

It localises to the secreted. The catalysed reaction is an [RNA] containing cytidine + H2O = an [RNA]-3'-cytidine-3'-phosphate + a 5'-hydroxy-ribonucleotide-3'-[RNA].. It catalyses the reaction an [RNA] containing uridine + H2O = an [RNA]-3'-uridine-3'-phosphate + a 5'-hydroxy-ribonucleotide-3'-[RNA].. Endonuclease that catalyzes the cleavage of RNA on the 3' side of pyrimidine nucleotides. Acts on single-stranded and double-stranded RNA. The protein is Ribonuclease pancreatic (RNASE1) of Odocoileus virginianus virginianus (Virginia white-tailed deer).